We begin with the raw amino-acid sequence, 479 residues long: Anaerobic nitric oxide reductase flavorubredoxin (479 aa).

The segment at leucine 30–isoleucine 210 is zinc metallo-hydrolase. Fe cation-binding residues include histidine 79, glutamate 81, aspartate 83, histidine 147, aspartate 166, and histidine 227. Positions isoleucine 254–alanine 393 constitute a Flavodoxin-like domain. Residues threonine 260–asparagine 264 and alanine 342–leucine 369 contribute to the FMN site. One can recognise a Rubredoxin-like domain in the interval glycine 423–lysine 479. Fe cation-binding residues include cysteine 428, cysteine 431, cysteine 461, and cysteine 464.

It in the N-terminal section; belongs to the zinc metallo-hydrolase group 3 family. As to quaternary structure, homotetramer. It depends on Fe cation as a cofactor. FMN is required as a cofactor.

It localises to the cytoplasm. Its pathway is nitrogen metabolism; nitric oxide reduction. Its function is as follows. Anaerobic nitric oxide reductase; uses NADH to detoxify nitric oxide (NO), protecting several 4Fe-4S NO-sensitive enzymes. Has at least 2 reductase partners, only one of which (NorW, flavorubredoxin reductase) has been identified. NO probably binds to the di-iron center; electrons enter from the reductase at rubredoxin and are transferred sequentially to the FMN center and the di-iron center. Also able to function as an aerobic oxygen reductase. The protein is Anaerobic nitric oxide reductase flavorubredoxin (norV) of Escherichia coli (strain K12 / DH10B).